A 208-amino-acid chain; its full sequence is Glutathione S-transferase (208 aa).

The region spanning 1–78 is the GST N-terminal domain; sequence MSYKLTYFPI…HLARKFNLNG (78 aa). Glutathione contacts are provided by residues Y7, K42, 49 to 50, and 62 to 63; these read QL and QS. Residues 80–200 form the GST C-terminal domain; it reads NNAETSYVDM…YCAKRNASKM (121 aa).

The protein belongs to the GST superfamily. Pi family. Homodimer.

It catalyses the reaction RX + glutathione = an S-substituted glutathione + a halide anion + H(+). Functionally, conjugation of reduced glutathione to a wide number of exogenous and endogenous hydrophobic electrophiles. In Dirofilaria immitis (Canine heartworm), this protein is Glutathione S-transferase.